The following is a 564-amino-acid chain: Phenylalanine--tRNA ligase beta subunit (564 aa).

One can recognise a B5 domain in the interval 286–362 (YFQNSLKINV…IGKGLDNFKS (77 aa)). Mg(2+)-binding residues include aspartate 340, aspartate 346, glutamate 349, and glutamate 350.

This sequence belongs to the phenylalanyl-tRNA synthetase beta subunit family. Type 2 subfamily. Tetramer of two alpha and two beta subunits. The cofactor is Mg(2+).

The protein resides in the cytoplasm. It catalyses the reaction tRNA(Phe) + L-phenylalanine + ATP = L-phenylalanyl-tRNA(Phe) + AMP + diphosphate + H(+). The sequence is that of Phenylalanine--tRNA ligase beta subunit from Borrelia recurrentis (strain A1).